A 181-amino-acid polypeptide reads, in one-letter code: Deoxyuridine 5'-triphosphate nucleotidohydrolase (181 aa).

Residues 96–98, asparagine 109, 113–115, and lysine 123 contribute to the substrate site; these read RSG and TVD.

The protein belongs to the dUTPase family. Mg(2+) serves as cofactor.

It catalyses the reaction dUTP + H2O = dUMP + diphosphate + H(+). It participates in pyrimidine metabolism; dUMP biosynthesis; dUMP from dCTP (dUTP route): step 2/2. This enzyme is involved in nucleotide metabolism: it produces dUMP, the immediate precursor of thymidine nucleotides and it decreases the intracellular concentration of dUTP so that uracil cannot be incorporated into DNA. The protein is Deoxyuridine 5'-triphosphate nucleotidohydrolase of Corynebacterium efficiens (strain DSM 44549 / YS-314 / AJ 12310 / JCM 11189 / NBRC 100395).